The following is a 626-amino-acid chain: Chaperone protein HtpG (626 aa).

Residues 1-341 are a; substrate-binding; it reads METKQFKAES…SEDLSLNISR (341 aa). A b region spans residues 342 to 552; it reads EILQHDRQLK…EGELSIEMEK (211 aa). Residues 490–509 form a disordered region; the sequence is DLGIEGEEKENTSSSDDKEN. The segment covering 498–509 has biased composition (basic and acidic residues); sequence KENTSSSDDKEN. A c region spans residues 553-626; it reads VLNAMPNNQN…FTNNICKIMK (74 aa).

This sequence belongs to the heat shock protein 90 family. In terms of assembly, homodimer.

Its subcellular location is the cytoplasm. Molecular chaperone. Has ATPase activity. The protein is Chaperone protein HtpG of Clostridium botulinum (strain Loch Maree / Type A3).